The following is a 73-amino-acid chain: Large ribosomal subunit protein bL31 (73 aa).

Belongs to the bacterial ribosomal protein bL31 family. Type A subfamily. As to quaternary structure, part of the 50S ribosomal subunit.

Its function is as follows. Binds the 23S rRNA. The polypeptide is Large ribosomal subunit protein bL31 (rpmE) (Ruegeria pomeroyi (strain ATCC 700808 / DSM 15171 / DSS-3) (Silicibacter pomeroyi)).